Reading from the N-terminus, the 291-residue chain is Undecaprenyl-diphosphatase 2 (291 aa).

Transmembrane regions (helical) follow at residues 39 to 59 (PGAAFTAITQIGTEAAVLIYF), 85 to 105 (ARMGWLVIVGSIPIGVLGLTL), 118 to 138 (ITATMLIVVGVIIGIADRMAA), 198 to 218 (AARYSFLLAIPAVLASGVFEL), 231 to 251 (PTLFATVIAFATGYVVIAWFM), and 262 to 282 (FVWYRIALGIVIIVLVSVGVL).

The protein belongs to the UppP family.

It localises to the cell membrane. It carries out the reaction di-trans,octa-cis-undecaprenyl diphosphate + H2O = di-trans,octa-cis-undecaprenyl phosphate + phosphate + H(+). In terms of biological role, catalyzes the dephosphorylation of undecaprenyl diphosphate (UPP). Confers resistance to bacitracin. The polypeptide is Undecaprenyl-diphosphatase 2 (Streptomyces coelicolor (strain ATCC BAA-471 / A3(2) / M145)).